The following is a 223-amino-acid chain: Deoxyribose-phosphate aldolase (223 aa).

The active-site Proton donor/acceptor is aspartate 91. The active-site Schiff-base intermediate with acetaldehyde is lysine 153. Lysine 182 acts as the Proton donor/acceptor in catalysis.

It belongs to the DeoC/FbaB aldolase family. DeoC type 1 subfamily.

It localises to the cytoplasm. It catalyses the reaction 2-deoxy-D-ribose 5-phosphate = D-glyceraldehyde 3-phosphate + acetaldehyde. It functions in the pathway carbohydrate degradation; 2-deoxy-D-ribose 1-phosphate degradation; D-glyceraldehyde 3-phosphate and acetaldehyde from 2-deoxy-alpha-D-ribose 1-phosphate: step 2/2. Functionally, catalyzes a reversible aldol reaction between acetaldehyde and D-glyceraldehyde 3-phosphate to generate 2-deoxy-D-ribose 5-phosphate. This Streptococcus pyogenes serotype M3 (strain ATCC BAA-595 / MGAS315) protein is Deoxyribose-phosphate aldolase.